The sequence spans 56 residues: Mitoregulin (56 aa).

At 2–9 (ADVSERTL) the chain is on the mitochondrial matrix side. The helical transmembrane segment at 10-27 (QLSVLVAFASGVLLGWQA) threads the bilayer. The Mitochondrial intermembrane segment spans residues 28-56 (NRLRRRYLDWRKRRLQDKLAATQKKLDLA).

In terms of assembly, interacts with mitochondrial trifunctional enzyme, a heterotetrameric complex composed of 2 HADHA subunits and 2 HADHB subunits. Interacts with cytochrome b5 reductase CYB5R3; the interaction is required to maintain cellular lipid composition and leads to stimulation of mitochondrial respiratory complex I activity. Interacts with ATP synthase subunit ATP5F1B/ATP5B.

It localises to the mitochondrion inner membrane. Its function is as follows. Positively regulates mitochondrial complex assembly and/or stability. Increases mitochondrial membrane potential while decreasing mitochondrial reactive oxygen species. Increases mitochondrial respiration rate. Increased mitochondrial respiratory activity promotes myogenic differentiation which facilitates muscle growth and regeneration. Increases mitochondrial calcium retention capacity. Plays a role in maintenance of cellular lipid composition through its interaction with cytochrome b5 reductase CYB5R3 which is required for mitochondrial respiratory complex I activity. Interacts with the mitochondrial trifunctional enzyme complex (MTE) and enhances fatty acid beta-oxidation. Not required for MTE formation or stability. Modulates triglyceride clearance in adipocytes through its role in regulating fatty acid beta-oxidation and lipolysis. This Homo sapiens (Human) protein is Mitoregulin.